The chain runs to 158 residues: Small ribosomal subunit protein uS9 (158 aa).

Positions 1-20 (MSETMQSLDQLSALKTTQPD) are enriched in polar residues. A disordered region spans residues 1-29 (MSETMQSLDQLSALKTTQPDAPTYTKKVD).

This sequence belongs to the universal ribosomal protein uS9 family.

This is Small ribosomal subunit protein uS9 from Rhodopseudomonas palustris (strain BisB5).